The following is a 180-amino-acid chain: ADP-ribosylation factor 4 (180 aa).

The N-myristoyl glycine moiety is linked to residue G2. Residues 24 to 31, 67 to 71, and 126 to 129 contribute to the GTP site; these read GLDAAGKT, DVGGQ, and NKQD.

The protein belongs to the small GTPase superfamily. Arf family.

It is found in the golgi apparatus. GTP-binding protein involved in protein trafficking; may modulate vesicle budding and uncoating within the Golgi apparatus. May be involved in ciliogenesis. The polypeptide is ADP-ribosylation factor 4 (arf4) (Xenopus laevis (African clawed frog)).